Consider the following 406-residue polypeptide: Bifunctional enzyme IspD/IspF (406 aa).

Residues 1 to 247 (MSLIRVNGEA…AFFFNPAKDT (247 aa)) form a 2-C-methyl-D-erythritol 4-phosphate cytidylyltransferase region. Positions 248–406 (FIGMGFDTHA…HVSMRYKQKL (159 aa)) are 2-C-methyl-D-erythritol 2,4-cyclodiphosphate synthase. Residues D254 and H256 each coordinate a divalent metal cation. 4-CDP-2-C-methyl-D-erythritol 2-phosphate is bound by residues 254–256 (DTH) and 280–281 (HS). H288 contacts a divalent metal cation. Residues 302–304 (DIG), 307–311 (FPDND), 378–381 (TTME), F385, and K388 contribute to the 4-CDP-2-C-methyl-D-erythritol 2-phosphate site.

The protein in the N-terminal section; belongs to the IspD/TarI cytidylyltransferase family. IspD subfamily. It in the C-terminal section; belongs to the IspF family. The cofactor is a divalent metal cation.

It catalyses the reaction 2-C-methyl-D-erythritol 4-phosphate + CTP + H(+) = 4-CDP-2-C-methyl-D-erythritol + diphosphate. The enzyme catalyses 4-CDP-2-C-methyl-D-erythritol 2-phosphate = 2-C-methyl-D-erythritol 2,4-cyclic diphosphate + CMP. The protein operates within isoprenoid biosynthesis; isopentenyl diphosphate biosynthesis via DXP pathway; isopentenyl diphosphate from 1-deoxy-D-xylulose 5-phosphate: step 2/6. It participates in isoprenoid biosynthesis; isopentenyl diphosphate biosynthesis via DXP pathway; isopentenyl diphosphate from 1-deoxy-D-xylulose 5-phosphate: step 4/6. Its function is as follows. Bifunctional enzyme that catalyzes the formation of 4-diphosphocytidyl-2-C-methyl-D-erythritol from CTP and 2-C-methyl-D-erythritol 4-phosphate (MEP) (IspD), and catalyzes the conversion of 4-diphosphocytidyl-2-C-methyl-D-erythritol 2-phosphate (CDP-ME2P) to 2-C-methyl-D-erythritol 2,4-cyclodiphosphate (ME-CPP) with a corresponding release of cytidine 5-monophosphate (CMP) (IspF). The sequence is that of Bifunctional enzyme IspD/IspF from Helicobacter pylori (strain HPAG1).